Here is a 112-residue protein sequence, read N- to C-terminus: Small ribosomal subunit protein bS6 (112 aa).

The protein belongs to the bacterial ribosomal protein bS6 family.

Binds together with bS18 to 16S ribosomal RNA. The chain is Small ribosomal subunit protein bS6 from Legionella pneumophila (strain Paris).